Consider the following 401-residue polypeptide: cAMP-dependent protein kinase type II-alpha regulatory subunit (401 aa).

The residue at position 2 (Ser2) is an N-acetylserine. The tract at residues 2-135 is dimerization and phosphorylation; it reads SHIQIPPGLT…RLQEACKDIL (134 aa). A disordered region spans residues 43–65; the sequence is ARSRASTPPAAPPSGSQDFDPGA. A compositionally biased stretch (low complexity) spans 46 to 58; the sequence is RASTPPAAPPSGS. Residues Ser48, Ser75, and Ser77 each carry the phosphoserine modification. The residue at position 96 (Ser96) is a Phosphoserine; by PKA. 3',5'-cyclic AMP contacts are provided by residues 136-257, Glu205, Arg214, 258-401, Glu335, and Arg344; these read LFKN…ESVP and LLKS…DPGQ. Thr212 carries the phosphothreonine; by PDPK1 modification. A phosphoserine mark is found at Ser347 and Ser392.

This sequence belongs to the cAMP-dependent kinase regulatory chain family. The inactive form of the enzyme is composed of two regulatory chains and two catalytic chains. Activation by cAMP produces two active catalytic monomers and a regulatory dimer that binds four cAMP molecules. Interacts with AKAP4 and CBFA2T3. Interacts with the phosphorylated form of PJA2. Interacts with MYRIP; this interaction may link PKA to components of the exocytosis machinery, thus facilitating exocytosis, including insulin release. Forms a complex composed of PRKAR2A, GSK3B and GSKIP through GSKIP interaction; facilitates PKA-induced phosphorylation and regulates GSK3B activity. Interacts with ADCY8; inhibits adenylate cyclase activity through PKA phosphorylation. A second phosphorylation site has not been located. In terms of processing, phosphorylation of Thr-212 by PDPK1 seems to attenuate the activity of PKA, perhaps by strengthening interaction between the regulatory and the catalytic subunits. Four types of regulatory chains are found: I-alpha, I-beta, II-alpha, and II-beta. Their expression varies among tissues and is in some cases constitutive and in others inducible.

The protein resides in the cytoplasm. The protein localises to the cell membrane. In terms of biological role, regulatory subunit of the cAMP-dependent protein kinases involved in cAMP signaling in cells. Type II regulatory chains mediate membrane association by binding to anchoring proteins, including the MAP2 kinase. This Bos taurus (Bovine) protein is cAMP-dependent protein kinase type II-alpha regulatory subunit (PRKAR2A).